The chain runs to 576 residues: DNA primase (576 aa).

A CHC2-type zinc finger spans residues 40–64; the sequence is CPFHNEKTPSFNVVAKKQFYHCFGC. In terms of domain architecture, Toprim spans 251–333; it reads DSIIVVEGYM…GLDAGFIFLP (83 aa). Mg(2+) contacts are provided by Glu-257, Asp-301, and Asp-303.

The protein belongs to the DnaG primase family. Monomer. Interacts with DnaB. Requires Zn(2+) as cofactor. Mg(2+) serves as cofactor.

The catalysed reaction is ssDNA + n NTP = ssDNA/pppN(pN)n-1 hybrid + (n-1) diphosphate.. In terms of biological role, RNA polymerase that catalyzes the synthesis of short RNA molecules used as primers for DNA polymerase during DNA replication. The chain is DNA primase from Legionella pneumophila.